The chain runs to 351 residues: Signal recognition particle receptor FtsY (351 aa).

GTP is bound by residues 152–159, 235–239, and 299–302; these read GVNGSGKT, DTAGR, and TKMD.

This sequence belongs to the GTP-binding SRP family. FtsY subfamily. Part of the signal recognition particle protein translocation system, which is composed of SRP and FtsY.

It localises to the cell membrane. It is found in the cytoplasm. The catalysed reaction is GTP + H2O = GDP + phosphate + H(+). In terms of biological role, involved in targeting and insertion of nascent membrane proteins into the cytoplasmic membrane. Acts as a receptor for the complex formed by the signal recognition particle (SRP) and the ribosome-nascent chain (RNC). This Metamycoplasma hominis (strain ATCC 23114 / DSM 25592 / NBRC 14850 / NCTC 10111 / PG21) (Mycoplasma hominis) protein is Signal recognition particle receptor FtsY.